The following is an 848-amino-acid chain: DIS3-like exonuclease 2 (848 aa).

Residues 153-173 form a disordered region; it reads KGDRNSGKTDNNSPNKTEKRC. Residues aspartate 345 and aspartate 354 each coordinate Mg(2+).

This sequence belongs to the RNR ribonuclease family. DIS3L2 subfamily. Mg(2+) is required as a cofactor. Mn(2+) serves as cofactor. In terms of processing, cleaved by caspase ced-3 in vitro.

It is found in the cytoplasm. Its subcellular location is the P-body. In terms of biological role, 3'-5'-exoribonuclease that specifically recognizes RNAs polyuridylated at their 3' end and mediates their degradation. Component of an exosome-independent RNA degradation pathway that mediates degradation of cytoplasmic mRNAs that have been deadenylated and subsequently uridylated at their 3'. The sequence is that of DIS3-like exonuclease 2 from Caenorhabditis elegans.